The chain runs to 259 residues: MSTLSRNALPLEGQVAVVTGGAHGIGLGIVERLLGLGARVTASDIDESGLSLLCERLAAKHADAIAVHAADLSEEQGAQGLHRAAVERFGSVQILVNCAGGGVIRPFLEHTPETLKATIDRNLWTALWCSRVFLPDMLARQYGRIINIGADSVRNGLPDHAAYNAAKGGMHGLTTGLAREFARQGVTVNTVAPCAVNTEVWVRIKNANPELAQRFLDVIPMGRVGEIEEVASMVGYLAQPEAAFVTGQVISVNGGSTML.

18–42 (VTGGAHGIGLGIVERLLGLGARVTA) is an NAD(+) binding site. The active-site Proton acceptor is Tyr-163.

It belongs to the short-chain dehydrogenases/reductases (SDR) family.

It catalyses the reaction (2R,3S)-2,3-dihydroxy-2,3-dihydro-p-cumate + NAD(+) = 2,3-dihydroxy-p-cumate + NADH + H(+). Its pathway is aromatic compound metabolism; p-cumate degradation; acetaldehyde and pyruvate from p-cumate: step 2/7. This chain is 2,3-dihydroxy-2,3-dihydro-p-cumate dehydrogenase (cmtB), found in Pseudomonas putida (strain ATCC 700007 / DSM 6899 / JCM 31910 / BCRC 17059 / LMG 24140 / F1).